The primary structure comprises 212 residues: MGRLLVLEGIDGCGKTTQLQQLSSWLPKSGLMPDESRLVVTREPGGTALGTSLRQLLLHPPQDADPGPTAELLLYAADRAQHVDRVIQPALERGDWVLSDRFTGSTMAYQGYGRGLNRELITDLERIATRGLTPDMTVWLDIPLALSVQRRGSREEDRIEAEGLAFLERVSEGFSDMCKARDWVSVVADRPLLEVAEAIQTALLTRAAAWQR.

Position 9–16 (9–16) interacts with ATP; it reads GIDGCGKT.

This sequence belongs to the thymidylate kinase family.

It catalyses the reaction dTMP + ATP = dTDP + ADP. Its function is as follows. Phosphorylation of dTMP to form dTDP in both de novo and salvage pathways of dTTP synthesis. This Synechococcus sp. (strain CC9311) protein is Thymidylate kinase.